The following is a 130-amino-acid chain: Small ribosomal subunit protein uS11 (130 aa).

Residues 111 to 130 (IRDVTPVPHNGSRPPKRRRA) are disordered.

The protein belongs to the universal ribosomal protein uS11 family. In terms of assembly, part of the 30S ribosomal subunit. Interacts with proteins S7 and S18. Binds to IF-3.

Functionally, located on the platform of the 30S subunit, it bridges several disparate RNA helices of the 16S rRNA. Forms part of the Shine-Dalgarno cleft in the 70S ribosome. In Lactobacillus acidophilus (strain ATCC 700396 / NCK56 / N2 / NCFM), this protein is Small ribosomal subunit protein uS11.